Here is a 207-residue protein sequence, read N- to C-terminus: MYIPKYFKVTNAEEIWNFVQENSFGTVVTTEQGKPIATHLPLGFNKKDDHYYITGHFAYGNPQWRTFEACEDVLVMFQGPHAYISSSWYSRENVPTWNYQAVHMYGKASMLEKDELAEELTIMLEKYEKHRDNPVLWDKLSPKLLESELKGIVGFKIKVEDIQAAYKLSQNRNETDYMNVIEQLQNEENPNAKQMAELMEDKLKKQI.

Belongs to the PaiB family.

Involved in the reduction of extracellular and cell-associated protease levels, as well as in the reduced levels of alpha-amylase, levansucrase, alkaline phosphatase and sporulation inhibition, when present in high copy number. The sequence is that of Protease synthase and sporulation protein PAI 2 (paiB) from Bacillus subtilis (strain 168).